A 550-amino-acid chain; its full sequence is Chaperonin GroEL (550 aa).

ATP is bound by residues 30–33, K51, 87–91, G415, and D497; these read TLGP and DGTTT.

It belongs to the chaperonin (HSP60) family. Forms a cylinder of 14 subunits composed of two heptameric rings stacked back-to-back. Interacts with the co-chaperonin GroES.

It is found in the cytoplasm. It catalyses the reaction ATP + H2O + a folded polypeptide = ADP + phosphate + an unfolded polypeptide.. Together with its co-chaperonin GroES, plays an essential role in assisting protein folding. The GroEL-GroES system forms a nano-cage that allows encapsulation of the non-native substrate proteins and provides a physical environment optimized to promote and accelerate protein folding. The chain is Chaperonin GroEL from Yersinia enterocolitica serotype O:8 / biotype 1B (strain NCTC 13174 / 8081).